Here is a 273-residue protein sequence, read N- to C-terminus: Dermonecrotic toxin LsaSicTox-alphaIB1aii (273 aa).

Residue His5 is part of the active site. The Mg(2+) site is built by Glu25 and Asp27. The active-site Nucleophile is the His41. Disulfide bonds link Cys45–Cys51 and Cys47–Cys190. Asp85 contacts Mg(2+).

Belongs to the arthropod phospholipase D family. Class II subfamily. It depends on Mg(2+) as a cofactor. Expressed by the venom gland.

It is found in the secreted. The catalysed reaction is an N-(acyl)-sphingosylphosphocholine = an N-(acyl)-sphingosyl-1,3-cyclic phosphate + choline. It catalyses the reaction an N-(acyl)-sphingosylphosphoethanolamine = an N-(acyl)-sphingosyl-1,3-cyclic phosphate + ethanolamine. The enzyme catalyses a 1-acyl-sn-glycero-3-phosphocholine = a 1-acyl-sn-glycero-2,3-cyclic phosphate + choline. It carries out the reaction a 1-acyl-sn-glycero-3-phosphoethanolamine = a 1-acyl-sn-glycero-2,3-cyclic phosphate + ethanolamine. Functionally, dermonecrotic toxins cleave the phosphodiester linkage between the phosphate and headgroup of certain phospholipids (sphingolipid and lysolipid substrates), forming an alcohol (often choline) and a cyclic phosphate. This toxin acts on sphingomyelin (SM). It may also act on ceramide phosphoethanolamine (CPE), lysophosphatidylcholine (LPC) and lysophosphatidylethanolamine (LPE), but not on lysophosphatidylserine (LPS), and lysophosphatidylglycerol (LPG). It acts by transphosphatidylation, releasing exclusively cyclic phosphate products as second products. Induces dermonecrosis, hemolysis, increased vascular permeability, edema, inflammatory response, and platelet aggregation. This Loxosceles sabina (Tucson recluse spider) protein is Dermonecrotic toxin LsaSicTox-alphaIB1aii.